The sequence spans 937 residues: Aconitate hydratase A (937 aa).

Residues Cys439, Cys505, and Cys508 each contribute to the [4Fe-4S] cluster site. The disordered stretch occupies residues Lys898 to Thr921.

It belongs to the aconitase/IPM isomerase family. Monomer. [4Fe-4S] cluster is required as a cofactor.

The catalysed reaction is citrate = D-threo-isocitrate. It catalyses the reaction (2S,3R)-3-hydroxybutane-1,2,3-tricarboxylate = 2-methyl-cis-aconitate + H2O. It participates in carbohydrate metabolism; tricarboxylic acid cycle; isocitrate from oxaloacetate: step 2/2. The protein operates within organic acid metabolism; propanoate degradation. Functionally, involved in the catabolism of short chain fatty acids (SCFA) via the tricarboxylic acid (TCA)(acetyl degradation route) and probably the 2-methylcitrate cycle I (propionate degradation route). Catalyzes the reversible isomerization of citrate to isocitrate via cis-aconitate. Could catalyze the hydration of 2-methyl-cis-aconitate to yield (2R,3S)-2-methylisocitrate. The apo form of AcnA functions as a RNA-binding regulatory protein. This Francisella tularensis subsp. holarctica (strain LVS) protein is Aconitate hydratase A (acn).